Consider the following 318-residue polypeptide: MTETTERIVLLVPHTGRSSNIESAVLAAEHLDRAGITVRVLVNEEDDPIKTHPVLGRFEHVIHSRTAAEGAELVLVLGGDGTFLRAADLAHAVDLPVLGINLGHVGFLAEWESDSLEDAVKRVIDCDYRVEDRMTLDVIVRDSDLEVIGRGWALNEVSVENLNRRGVLDATLEVDFRPVASFGCDGVLISTPTGSTAYAFSAGGPVLWPELDAILVVPNNAHALFTKPLVVSPRSTVAVESMSGTSPAMAVMDGFRPIPMPPGSRVEIVRGKRPVRWVRLDSLPFTDRLVHKLRLPVVGWRGPDKQKELLDAETPDQP.

The active-site Proton acceptor is Asp-80. NAD(+) is bound by residues 80-81 (DG), Arg-85, 155-156 (NE), Asp-185, and 196-201 (TAYAFS).

Belongs to the NAD kinase family. A divalent metal cation is required as a cofactor.

The protein localises to the cytoplasm. It carries out the reaction NAD(+) + ATP = ADP + NADP(+) + H(+). Its function is as follows. Involved in the regulation of the intracellular balance of NAD and NADP, and is a key enzyme in the biosynthesis of NADP. Catalyzes specifically the phosphorylation on 2'-hydroxyl of the adenosine moiety of NAD to yield NADP. This is NAD kinase from Corynebacterium efficiens (strain DSM 44549 / YS-314 / AJ 12310 / JCM 11189 / NBRC 100395).